The following is a 206-amino-acid chain: Small ribosomal subunit protein uS5 (206 aa).

The segment at 1–42 is disordered; it reads MENKTEVVVAENANNQTQPERKKFDRKPNRRPQGPKQFQKDD. The 64-residue stretch at 43 to 106 folds into the S5 DRBM domain; the sequence is FEEKVVTIRR…KEAKKNLIRV (64 aa).

It belongs to the universal ribosomal protein uS5 family. In terms of assembly, part of the 30S ribosomal subunit. Contacts proteins S4 and S8.

Its function is as follows. With S4 and S12 plays an important role in translational accuracy. Functionally, located at the back of the 30S subunit body where it stabilizes the conformation of the head with respect to the body. This Mesoplasma florum (strain ATCC 33453 / NBRC 100688 / NCTC 11704 / L1) (Acholeplasma florum) protein is Small ribosomal subunit protein uS5.